The following is a 304-amino-acid chain: MLRLRCKTREGTQLLQGLTDRSSIRELQERIAGVTGISGPLQRVMVGFPPLSLDLSDEEATLKNMSIKSGDTLIVEEDKSKLRSATPPVSKTDIGNWNAPAQPTIVRRVVPADNSCLFTSIYYVVEGGVYDPACALEMRSLIAEIVASDQSAYCDAVLGKSNEEYCSWIRREDTWGGAIEVSILSKFYQCEICVVDTQTVRIDRFGEDSGYTKRVLLIYDGIHYDPLQRQFPDPDMPPMTVFSTTDDEALVQAMELADDARKKRQFTDVNQFALRCMACQKGLTGQSAARDHAKETGHTNFGEV.

The segment at Arg5–Arg83 is UBX-like. Residues Ile105 to Gln230 enclose the OTU domain. Positions Val110–Cys116 are cys-loop. Residue Asp113 is part of the active site. Cys116 functions as the Nucleophile in the catalytic mechanism. The tract at residues Ile169–Ile179 is variable-loop. Residues Tyr219–His223 are his-loop. Ile222 contacts substrate. His223 is an active-site residue. The segment at Asp247 to Gln252 is S2 site. Residues Leu274 to His298 form a C2H2-type zinc finger. The active site involves His298.

It localises to the cytoplasm. It catalyses the reaction Thiol-dependent hydrolysis of ester, thioester, amide, peptide and isopeptide bonds formed by the C-terminal Gly of ubiquitin (a 76-residue protein attached to proteins as an intracellular targeting signal).. Functionally, hydrolase that can remove conjugated ubiquitin from proteins and participates in endoplasmic reticulum-associated degradation (ERAD) for misfolded lumenal proteins. May act by triming the ubiquitin chain on the associated substrate to facilitate their threading through the VCP/p97 pore. Ubiquitin moieties on substrates may present a steric impediment to the threading process when the substrate is transferred to the VCP pore and threaded through VCP's axial channel. Mediates deubiquitination of 'Lys-27'-, 'Lys-29'- and 'Lys-33'-linked polyubiquitin chains. Also able to hydrolyze 'Lys-11'-linked ubiquitin chains. Cleaves both polyubiquitin and di-ubiquitin. This is Ubiquitin thioesterase OTU1 (yod1) from Xenopus laevis (African clawed frog).